We begin with the raw amino-acid sequence, 115 residues long: Large ribosomal subunit protein bL19 (115 aa).

Belongs to the bacterial ribosomal protein bL19 family.

Its function is as follows. This protein is located at the 30S-50S ribosomal subunit interface and may play a role in the structure and function of the aminoacyl-tRNA binding site. The protein is Large ribosomal subunit protein bL19 of Nitrosococcus oceani (strain ATCC 19707 / BCRC 17464 / JCM 30415 / NCIMB 11848 / C-107).